Reading from the N-terminus, the 450-residue chain is MGKYFGTDGVRGEANLELTPELAFKLGRFGGYVLSQHETEAPKVFVGRDTRISGEMLESALVAGLLSVGIHVYKLGVLATPAVAYLVETEGASAGVMISASHNPALDNGIKFFGGDGFKLDDEKEAEIEALLDAEEDTLPRPSAEGLGILVDYPEGLRKYEGYLVSTGTPLDGMKVALDTANGAASTSARQIFADLGAQLTVIGETPDGLNINLNVGSTHPEALQEVVKESGSAIGLAFDGDSDRLIAVDENGDIVDGDKIMYIIGKYLSKKGQLAQNTIVTTVMSNLGFHKALNREGINKAVTAVGDRYVVEEMRKSGYNLGGEQSGHVILMDYNTTGDGQLSAVQLTKIMKETGKSLSELAAEVTIYPQKLVNIRVENVMKEKAMEVPAIKAIIEKMEEEMAGNGRILVRPSGTEPLLRVMAEAPTTEEVDYYVDTITDVVRAEIGID.

The Phosphoserine intermediate role is filled by Ser101. Mg(2+)-binding residues include Ser101, Asp240, Asp242, and Asp244. Ser101 carries the phosphoserine modification.

Belongs to the phosphohexose mutase family. It depends on Mg(2+) as a cofactor. In terms of processing, activated by phosphorylation. Phosphorylated by StkP in vivo.

The enzyme catalyses alpha-D-glucosamine 1-phosphate = D-glucosamine 6-phosphate. Catalyzes the conversion of glucosamine-6-phosphate to glucosamine-1-phosphate. The protein is Phosphoglucosamine mutase of Streptococcus pneumoniae (strain ATCC BAA-255 / R6).